The primary structure comprises 319 residues: Transcription factor STKL2 (319 aa).

The disordered stretch occupies residues 1 to 119 (MAPLESPATA…NKKANPQRVW (119 aa)). Positions 21-34 (EIFKSSSEESKPKD) are enriched in basic and acidic residues. Positions 38-55 (VPSSKTLKSPSAAVNSKT) are enriched in polar residues. Residues 89 to 112 (RAGEGSTSRDMHVKRVKKEDDNKK) show a composition bias toward basic and acidic residues.

It belongs to the GeBP family. As to expression, expressed strongly in leaves and flowers, weakly in roots, and very weakly in stems.

Its subcellular location is the nucleus. Functionally, transcription repressor that binds DNA in a sequence-specific manner, 5'-GCCT-3', to regulate the expression of PGR. Acts as a modulatory component for the glucose-triggered developmental leaf growth process. The protein is Transcription factor STKL2 of Arabidopsis thaliana (Mouse-ear cress).